The chain runs to 378 residues: D-alanine--D-alanine ligase (378 aa).

An ATP-grasp domain is found at 149–374; it reads KVLLAAAGIP…YTDLITKLIE (226 aa). Residue 189–247 participates in ATP binding; that stretch reads EAGLQYPLFVKPSRAGSSFGVTKVEHEGDAAELAAAVYEASRHDWRILVEQGIDAREIE. Residues Asp-328, Glu-341, and Asn-343 each contribute to the Mg(2+) site.

The protein belongs to the D-alanine--D-alanine ligase family. Requires Mg(2+) as cofactor. Mn(2+) is required as a cofactor.

Its subcellular location is the cytoplasm. The catalysed reaction is 2 D-alanine + ATP = D-alanyl-D-alanine + ADP + phosphate + H(+). Its pathway is cell wall biogenesis; peptidoglycan biosynthesis. Functionally, cell wall formation. The chain is D-alanine--D-alanine ligase from Bifidobacterium adolescentis (strain ATCC 15703 / DSM 20083 / NCTC 11814 / E194a).